The primary structure comprises 92 residues: C-C motif chemokine 4 (92 aa).

Residues 1 to 23 (MKLCVSALSLLLLVAAFCAPGFS) form the signal peptide. 2 cysteine pairs are disulfide-bonded: cysteine 34–cysteine 58 and cysteine 35–cysteine 74.

Belongs to the intercrine beta (chemokine CC) family. In terms of assembly, homodimer.

The protein resides in the secreted. Its function is as follows. Monokine with inflammatory and chemokinetic properties. This is C-C motif chemokine 4 (Ccl4) from Mus musculus (Mouse).